The sequence spans 797 residues: MPLICIVYFLQYLDKIAISYASVTGLRESANLHGNQFNWVSTSTESIFPDCSTGPLSKNNVCDTSLDPVSRAKSLVAAMTLEEKINNTKYDSSGAPRLGLPAYNWWNEALHGVAEGHGVSFSDSGNFSYATSFPMPILLGAAFDDDLVKQVATVISTEARAFANGGHAGLDYWTPNINPFRDPRWGRGQETPGEDPLHLSRYVYHLVDGLQDGIGPERPKVVATCKHFAAYDLENWEGIERYAFDAVVSPQDLSEYYLPSFKTCTRDAKVDAVMCSYNSLNGIPTCADRWLLQTLLREHWGWEQTGHWVTGDCGAIDNIYADHHYVADGAHAAAAALNAGTDLDCGSVFPEYLGSALQQGLYNNQTLNNALIRLYSSLVKLGYFDPADDQPYRSIGWNEVFTPAAEELAHKATVEGIVMLKNDGTLPLKSNGTVAIIGPFANATTQLQGNYEGPPKYIRTLIWAAVHNGYKVKFSQGTDINSNSSAGFAEAISAAKEADTVIYAGGIDNTIEKESQDRTTIVWPGNQLDLIEQLSDLEKPLIVVQFGGGQVDDSSLLANAGVGALLWAGYPSQAGGAAVFDILTGKSAPAGRLPVTQYPASYVDEVPMTDMTLRPGSNNPGRTYRWYDKAVLPFGFGLHYTTFNVSWNHAEYGPYNTDSVASGTTNAPVDTELFDTFSITVTNTGNVASDYIALLFLTADGVGPEPYPIKTLVGYSRAKGIEPGQSQQVKLDVSVGSVARTAENGDLVLYPGSYKLEVDVGQDFPTATFTVSGKEKVLDEFPEPQQNATSAVTRRGR.

An N-terminal signal peptide occupies residues 1–21 (MPLICIVYFLQYLDKIAISYA). N-linked (GlcNAc...) asparagine glycans are attached at residues Asn86 and Asn126. The active site involves Asp312. Asn364, Asn431, Asn442, Asn483, Asn644, and Asn787 each carry an N-linked (GlcNAc...) asparagine glycan.

The protein belongs to the glycosyl hydrolase 3 family.

The protein localises to the secreted. The enzyme catalyses Hydrolysis of (1-&gt;4)-beta-D-xylans, to remove successive D-xylose residues from the non-reducing termini.. Its pathway is glycan degradation; xylan degradation. Xylan 1,4-beta-xylosidase involved in the hydrolysis of xylan, a major structural heterogeneous polysaccharide found in plant biomass representing the second most abundant polysaccharide in the biosphere, after cellulose. This Aspergillus oryzae (strain ATCC 42149 / RIB 40) (Yellow koji mold) protein is Probable exo-1,4-beta-xylosidase bxlB (bxlB).